The primary structure comprises 334 residues: Phosphate acyltransferase (334 aa).

It belongs to the PlsX family. Homodimer. Probably interacts with PlsY.

It is found in the cytoplasm. It carries out the reaction a fatty acyl-[ACP] + phosphate = an acyl phosphate + holo-[ACP]. Its pathway is lipid metabolism; phospholipid metabolism. Its function is as follows. Catalyzes the reversible formation of acyl-phosphate (acyl-PO(4)) from acyl-[acyl-carrier-protein] (acyl-ACP). This enzyme utilizes acyl-ACP as fatty acyl donor, but not acyl-CoA. The sequence is that of Phosphate acyltransferase from Mycoplasma capricolum subsp. capricolum (strain California kid / ATCC 27343 / NCTC 10154).